The primary structure comprises 374 residues: Serine/threonine-protein kinase-transforming protein mos (374 aa).

The Protein kinase domain maps to 94 to 370 (VCLMHRLGSG…LLQRDLKAFR (277 aa)). Residues 100-108 (LGSGGFGSV) and lysine 121 contribute to the ATP site. Aspartate 229 functions as the Proton acceptor in the catalytic mechanism.

It belongs to the protein kinase superfamily. Ser/Thr protein kinase family.

It catalyses the reaction L-seryl-[protein] + ATP = O-phospho-L-seryl-[protein] + ADP + H(+). The catalysed reaction is L-threonyl-[protein] + ATP = O-phospho-L-threonyl-[protein] + ADP + H(+). The polypeptide is Serine/threonine-protein kinase-transforming protein mos (V-MOS) (Mus musculus (Mouse)).